The primary structure comprises 515 residues: MSTKLILSFSLCLMVLSCSAQAAQLWPWRKGQDSRPHHGHQQFQQQCDIQRLTASEPSRRVRSEAGVTEIWDHNTPEFRCTGFVAVRYVIQPGGLLLPSYSNAPYITFVEQGRGVQGVVIPGCPETFQSDSEYPQSQRGQHSRESESQESSRGDQHQKIFRVREGDVIPSPAGVVQWTHNDGDQDLISVTLLDANSFHNQLDENVRSFFLAGQSQQGREERRSQQQTREEGGDRQSRESDDVEALIGANILSGFQDEILHELFRDVDRETISKLRGENDQRGFIVQAQDLKLRVPEDSEEGYERQRGDRKRDERGSGRSNGLEQAFCNLKFRQNVNRPSHADVFNPRAGRINTVNSNNLPILEFLQLSAQHVVLYKNAIIGPRWNLNAHSALYVTRGEGRVQVVGDEGKSVFDDNVQRGQILVVPQGFAVVVKAGRQGLEWVELKNNDNAITSPIAGRTSVLRAIPVEVLANSYDISTEEAYKLKNGRQEVEVFRPFQSRYEKEEEKERERFSIV.

An N-terminal signal peptide occupies residues 1 to 22 (MSTKLILSFSLCLMVLSCSAQA). An igE-binding epitope region spans residues 23 to 96 (AQLWPWRKGQ…RYVIQPGGLL (74 aa)). Cystine bridges form between C47-C80 and C123-C327. The region spanning 52 to 272 (LTASEPSRRV…FRDVDRETIS (221 aa)) is the Cupin type-1 1 domain. The tract at residues 97 to 172 (LPSYSNAPYI…REGDVIPSPA (76 aa)) is igE-binding epitope with a very strong IgE-binding activity. Disordered regions lie at residues 123–156 (CPETFQSDSEYPQSQRGQHSRESESQESSRGDQH), 210–241 (LAGQSQQGREERRSQQQTREEGGDRQSRESDD), and 295–320 (PEDSEEGYERQRGDRKRDERGSGRSN). Composition is skewed to basic and acidic residues over residues 141 to 156 (HSRESESQESSRGDQH), 217 to 239 (GREERRSQQQTREEGGDRQSRES), and 295 to 316 (PEDSEEGYERQRGDRKRDERGS). IgE-binding epitope regions lie at residues 173 to 248 (GVVQ…LIGA) and 249 to 320 (NILS…GRSN). Residues 333-482 (QNVNRPSHAD…SYDISTEEAY (150 aa)) enclose the Cupin type-1 2 domain. The igE-binding epitope with a strong IgE-binding activity stretch occupies residues 347-387 (RAGRINTVNSNNLPILEFLQLSAQHVVLYKNAIIGPRWNLN). IgE-binding epitope stretches follow at residues 407 to 457 (EGKS…PIAG), 440 to 476 (EWVELKNNDNAITSPIAGRTSVLRAIPVEVLANSYDI), and 475 to 511 (DISTEEAYKLKNGRQEVEVFRPFQSRYEKEEEKERER).

Belongs to the 11S seed storage protein (globulins) family. In terms of assembly, homohexamer. Post-translationally, proteolytically processed from a single precursor to produce an acidic and a basic chain that are linked by a disulfide bond. In terms of tissue distribution, expressed in seeds (at protein level).

Its function is as follows. Seed storage protein. This is 13S globulin seed storage protein from Fagopyrum tataricum (Tartarian buckwheat).